Here is a 250-residue protein sequence, read N- to C-terminus: DNA repair protein RecO (250 aa).

This sequence belongs to the RecO family.

In terms of biological role, involved in DNA repair and RecF pathway recombination. In Beijerinckia indica subsp. indica (strain ATCC 9039 / DSM 1715 / NCIMB 8712), this protein is DNA repair protein RecO.